Here is a 541-residue protein sequence, read N- to C-terminus: Chaperonin GroEL (541 aa).

ATP-binding positions include 29 to 32 (TLGP), 86 to 90 (DGTTT), Gly-413, 476 to 478 (NAA), and Asp-492.

It belongs to the chaperonin (HSP60) family. Forms a cylinder of 14 subunits composed of two heptameric rings stacked back-to-back. Interacts with the co-chaperonin GroES.

It localises to the cytoplasm. It carries out the reaction ATP + H2O + a folded polypeptide = ADP + phosphate + an unfolded polypeptide.. Together with its co-chaperonin GroES, plays an essential role in assisting protein folding. The GroEL-GroES system forms a nano-cage that allows encapsulation of the non-native substrate proteins and provides a physical environment optimized to promote and accelerate protein folding. This is Chaperonin GroEL from Rhodococcus hoagii (Corynebacterium equii).